A 199-amino-acid chain; its full sequence is uncharacterized protein (199 aa).

This is an uncharacterized protein from Rhodococcus erythropolis (Arthrobacter picolinophilus).